The sequence spans 154 residues: Ribonuclease H (154 aa).

The RNase H type-1 domain occupies 1–142 (MTPKLVIYTD…ADELARLGML (142 aa)). Mg(2+)-binding residues include Asp-10, Glu-48, Asp-70, and Asp-134.

This sequence belongs to the RNase H family. As to quaternary structure, monomer. The cofactor is Mg(2+).

The protein localises to the cytoplasm. The catalysed reaction is Endonucleolytic cleavage to 5'-phosphomonoester.. In terms of biological role, endonuclease that specifically degrades the RNA of RNA-DNA hybrids. The polypeptide is Ribonuclease H (Caulobacter sp. (strain K31)).